We begin with the raw amino-acid sequence, 630 residues long: 1-deoxy-D-xylulose-5-phosphate synthase (630 aa).

Residues histidine 72 and glycine 113–serine 115 contribute to the thiamine diphosphate site. Residue aspartate 144 coordinates Mg(2+). Residues glycine 145–alanine 146, asparagine 173, tyrosine 284, and glutamate 367 contribute to the thiamine diphosphate site. Asparagine 173 is a Mg(2+) binding site.

This sequence belongs to the transketolase family. DXPS subfamily. Homodimer. It depends on Mg(2+) as a cofactor. Thiamine diphosphate is required as a cofactor.

The catalysed reaction is D-glyceraldehyde 3-phosphate + pyruvate + H(+) = 1-deoxy-D-xylulose 5-phosphate + CO2. The protein operates within metabolic intermediate biosynthesis; 1-deoxy-D-xylulose 5-phosphate biosynthesis; 1-deoxy-D-xylulose 5-phosphate from D-glyceraldehyde 3-phosphate and pyruvate: step 1/1. Functionally, catalyzes the acyloin condensation reaction between C atoms 2 and 3 of pyruvate and glyceraldehyde 3-phosphate to yield 1-deoxy-D-xylulose-5-phosphate (DXP). This is 1-deoxy-D-xylulose-5-phosphate synthase from Bacillus cereus (strain B4264).